Consider the following 352-residue polypeptide: 4-hydroxy-2-oxovalerate aldolase (352 aa).

The region spanning 13 to 265 is the Pyruvate carboxyltransferase domain; sequence VRLTDTSLRD…KTGIDFFDIA (253 aa). 21-22 is a substrate binding site; sequence RD. A Mn(2+)-binding site is contributed by Asp22. Catalysis depends on His25, which acts as the Proton acceptor. Substrate is bound by residues Ser175 and His204. The Mn(2+) site is built by His204 and His206. Tyr295 lines the substrate pocket.

This sequence belongs to the 4-hydroxy-2-oxovalerate aldolase family.

It carries out the reaction (S)-4-hydroxy-2-oxopentanoate = acetaldehyde + pyruvate. The polypeptide is 4-hydroxy-2-oxovalerate aldolase (Mycolicibacterium paratuberculosis (strain ATCC BAA-968 / K-10) (Mycobacterium paratuberculosis)).